The chain runs to 412 residues: MSLNIAILTTGDELVNGEMSDTNTARIAQLLGSWGYIVRESRAIGDDEVEIETALKDMSGRRDVIISTGGLGPTDDDLTARIAARAFGRRLVLNEEALAQIRRFFAEKNKEMHPRNEKQALLPQKTVILPNRLGTAPGFHLCHEQCDMFFLPGVPREMVDMLKEQVLPRLHERSGGQAPRQERILKVFGLSEPKVEEHFSQAPLPEGVELAFGVEFPFVYVKLRACGDQAGALLDRAEMHTRKVLQPFVFAVGQETLAGNVARMLTDTGLTLALAESCTGGMISQMLTDIPGASRFLERGGVTYSNAAKQDWLQVSEDILNQEGAVSKACAQAMAQGIRQAAGTDLGLAITGIAGPDGGTPDKPVGTVFLALSTTGEERVQGYRFSGDREQIRHISACMALEWLRRYLGNLY.

It belongs to the CinA family.

In Syntrophotalea carbinolica (strain DSM 2380 / NBRC 103641 / GraBd1) (Pelobacter carbinolicus), this protein is CinA-like protein.